The chain runs to 454 residues: Bifunctional protein GlmU (454 aa).

The pyrophosphorylase stretch occupies residues 1 to 233 (MTNRTCLAVI…RESAVGINNR (233 aa)). UDP-N-acetyl-alpha-D-glucosamine-binding positions include 11-14 (LAAG), Lys-25, Gln-79, and 84-85 (GT). Residue Asp-109 participates in Mg(2+) binding. Positions 145, 159, 174, and 231 each coordinate UDP-N-acetyl-alpha-D-glucosamine. Asn-231 is a Mg(2+) binding site. The interval 234 to 254 (AELAEAEAVWQQKRRRELMLS) is linker. Positions 255-454 (GVTLIAPETV…AEEKAKKSGG (200 aa)) are N-acetyltransferase. Arg-320 and Lys-338 together coordinate UDP-N-acetyl-alpha-D-glucosamine. His-350 serves as the catalytic Proton acceptor. UDP-N-acetyl-alpha-D-glucosamine contacts are provided by Tyr-353 and Asn-364. Acetyl-CoA is bound by residues Ala-367, 373 to 374 (NY), Ser-410, and Arg-427.

It in the N-terminal section; belongs to the N-acetylglucosamine-1-phosphate uridyltransferase family. The protein in the C-terminal section; belongs to the transferase hexapeptide repeat family. In terms of assembly, homotrimer. The cofactor is Mg(2+).

The protein resides in the cytoplasm. It carries out the reaction alpha-D-glucosamine 1-phosphate + acetyl-CoA = N-acetyl-alpha-D-glucosamine 1-phosphate + CoA + H(+). The catalysed reaction is N-acetyl-alpha-D-glucosamine 1-phosphate + UTP + H(+) = UDP-N-acetyl-alpha-D-glucosamine + diphosphate. The protein operates within nucleotide-sugar biosynthesis; UDP-N-acetyl-alpha-D-glucosamine biosynthesis; N-acetyl-alpha-D-glucosamine 1-phosphate from alpha-D-glucosamine 6-phosphate (route II): step 2/2. It participates in nucleotide-sugar biosynthesis; UDP-N-acetyl-alpha-D-glucosamine biosynthesis; UDP-N-acetyl-alpha-D-glucosamine from N-acetyl-alpha-D-glucosamine 1-phosphate: step 1/1. Its pathway is bacterial outer membrane biogenesis; LPS lipid A biosynthesis. Functionally, catalyzes the last two sequential reactions in the de novo biosynthetic pathway for UDP-N-acetylglucosamine (UDP-GlcNAc). The C-terminal domain catalyzes the transfer of acetyl group from acetyl coenzyme A to glucosamine-1-phosphate (GlcN-1-P) to produce N-acetylglucosamine-1-phosphate (GlcNAc-1-P), which is converted into UDP-GlcNAc by the transfer of uridine 5-monophosphate (from uridine 5-triphosphate), a reaction catalyzed by the N-terminal domain. In Chelativorans sp. (strain BNC1), this protein is Bifunctional protein GlmU.